We begin with the raw amino-acid sequence, 839 residues long: LPS-assembly protein LptD (839 aa).

Positions 1 to 21 are cleaved as a signal peptide; sequence MAIGITACVLSLINYQGLAYS.

This sequence belongs to the LptD family. In terms of assembly, component of the lipopolysaccharide transport and assembly complex. Interacts with LptE and LptA.

It is found in the cell outer membrane. Together with LptE, is involved in the assembly of lipopolysaccharide (LPS) at the surface of the outer membrane. The polypeptide is LPS-assembly protein LptD (Legionella pneumophila (strain Lens)).